We begin with the raw amino-acid sequence, 557 residues long: Dihydroxy-acid dehydratase (557 aa).

Residue Cys50 participates in [2Fe-2S] cluster binding. Asp82 contacts Mg(2+). [2Fe-2S] cluster is bound at residue Cys123. Asp124 and Lys125 together coordinate Mg(2+). N6-carboxylysine is present on Lys125. Position 195 (Cys195) interacts with [2Fe-2S] cluster. Position 447 (Glu447) interacts with Mg(2+). The Proton acceptor role is filled by Ser473.

Belongs to the IlvD/Edd family. In terms of assembly, homodimer. The cofactor is [2Fe-2S] cluster. Mg(2+) is required as a cofactor.

It carries out the reaction (2R)-2,3-dihydroxy-3-methylbutanoate = 3-methyl-2-oxobutanoate + H2O. The enzyme catalyses (2R,3R)-2,3-dihydroxy-3-methylpentanoate = (S)-3-methyl-2-oxopentanoate + H2O. It functions in the pathway amino-acid biosynthesis; L-isoleucine biosynthesis; L-isoleucine from 2-oxobutanoate: step 3/4. Its pathway is amino-acid biosynthesis; L-valine biosynthesis; L-valine from pyruvate: step 3/4. In terms of biological role, functions in the biosynthesis of branched-chain amino acids. Catalyzes the dehydration of (2R,3R)-2,3-dihydroxy-3-methylpentanoate (2,3-dihydroxy-3-methylvalerate) into 2-oxo-3-methylpentanoate (2-oxo-3-methylvalerate) and of (2R)-2,3-dihydroxy-3-methylbutanoate (2,3-dihydroxyisovalerate) into 2-oxo-3-methylbutanoate (2-oxoisovalerate), the penultimate precursor to L-isoleucine and L-valine, respectively. The polypeptide is Dihydroxy-acid dehydratase (Nitrosomonas eutropha (strain DSM 101675 / C91 / Nm57)).